The sequence spans 475 residues: Ankyrin repeat, SAM and basic leucine zipper domain-containing protein 1 (475 aa).

The interval 1–25 (MAAGTLRGLAVAGGGESSDSEDDGW) is disordered. Phosphoserine occurs at positions 17, 18, and 20. 6 ANK repeats span residues 45–74 (EKNE…NVDS), 78–107 (YGWT…NASF), 110–144 (DKLT…DPNT), 148–177 (RLMT…EVNA), 181–210 (NGYT…NKML), and 214–243 (DGRT…PLEG). The region spanning 272–334 (PYTAFGDLEI…KILAALKELE (63 aa)) is the SAM domain.

In terms of assembly, interacts with DDX4, PIWIL1, RANBP9 and TDRD1. In terms of tissue distribution, expressed exclusively in testis and ovary with higher levels in testis.

Its subcellular location is the cytoplasm. Plays a central role during spermatogenesis by repressing transposable elements and preventing their mobilization, which is essential for the germline integrity. Acts via the piRNA metabolic process, which mediates the repression of transposable elements during meiosis by forming complexes composed of piRNAs and Piwi proteins and governs the methylation and subsequent repression of transposons. Its association with pi-bodies suggests a participation in the primary piRNAs metabolic process. Required prior to the pachytene stage to facilitate the production of multiple types of piRNAs, including those associated with repeats involved in regulation of retrotransposons. May act by mediating protein-protein interactions during germ cell maturation. The polypeptide is Ankyrin repeat, SAM and basic leucine zipper domain-containing protein 1 (Mus musculus (Mouse)).